The following is a 196-amino-acid chain: Imidazoleglycerol-phosphate dehydratase (196 aa).

This sequence belongs to the imidazoleglycerol-phosphate dehydratase family.

The protein resides in the cytoplasm. The enzyme catalyses D-erythro-1-(imidazol-4-yl)glycerol 3-phosphate = 3-(imidazol-4-yl)-2-oxopropyl phosphate + H2O. Its pathway is amino-acid biosynthesis; L-histidine biosynthesis; L-histidine from 5-phospho-alpha-D-ribose 1-diphosphate: step 6/9. This is Imidazoleglycerol-phosphate dehydratase from Nitratidesulfovibrio vulgaris (strain DSM 19637 / Miyazaki F) (Desulfovibrio vulgaris).